The chain runs to 506 residues: Cytochrome P450 monooxygenase BOA3 (506 aa).

A helical transmembrane segment spans residues 15–35 (IYLWIGFVLVVLLAYPTYFAI). Residue Cys451 coordinates heme.

The protein belongs to the cytochrome P450 family. It depends on heme as a cofactor.

The protein localises to the membrane. It participates in polyketide biosynthesis. In terms of biological role, cytochrome P450 monooxygenase; part of the gene cluster A that mediates the biosynthesis of botcinic acid and its botcinin derivatives, acetate-derived polyketides that contribute to virulence when combined with the sesquiterpene botrydial. Botcinic acid and its derivatives have been shown to induce chlorosis and necrosis during host plant infection, but also have antifungal activities. Two polyketide synthases, BOA6 and BOA9, are involved in the biosynthesis of botcinins. BOA6 mediates the formation of the per-methylated tetraketide core by condensation of four units of malonyl-CoA with one unit of acetyl-CoA, which would be methylated in activated methylene groups to yield a bicyclic acid intermediate that could then either be converted to botrylactone derivatives or lose the starter acetate unit through a retro-Claisen type C-C bond cleavage to yield botcinin derivatives. The second polyketide synthase, BOA9, is probably required for the biosynthesis of the tetraketide side chain of botcinins. The methyltransferase (MT) domain within BOA6 is probably responsible for the incorporation of four methyl groups. The trans-enoyl reductase BOA5 might take over the enoyl reductase function of BOA6 that misses an ER domain. The monooxygenases BOA2, BOA3 and BOA4 might be involved in further hydroxylations at C4, C5 and C8, whereas BOA7, close to BOA9, could potentially be involved in the hydroxylation at C4 in the side chain of botcinins. In Botryotinia fuckeliana (strain B05.10) (Noble rot fungus), this protein is Cytochrome P450 monooxygenase BOA3.